The chain runs to 236 residues: Purine nucleoside phosphorylase DeoD-type (236 aa).

Histidine 4 contributes to the a purine D-ribonucleoside binding site. Phosphate is bound by residues glycine 20, arginine 24, arginine 43, and 87 to 90 (RVGT). A purine D-ribonucleoside-binding positions include 179-181 (EME) and 203-204 (SD). The Proton donor role is filled by aspartate 204.

The protein belongs to the PNP/UDP phosphorylase family. Homohexamer; trimer of homodimers.

The enzyme catalyses a purine D-ribonucleoside + phosphate = a purine nucleobase + alpha-D-ribose 1-phosphate. It carries out the reaction a purine 2'-deoxy-D-ribonucleoside + phosphate = a purine nucleobase + 2-deoxy-alpha-D-ribose 1-phosphate. In terms of biological role, catalyzes the reversible phosphorolytic breakdown of the N-glycosidic bond in the beta-(deoxy)ribonucleoside molecules, with the formation of the corresponding free purine bases and pentose-1-phosphate. The protein is Purine nucleoside phosphorylase DeoD-type of Streptococcus pneumoniae (strain CGSP14).